The following is a 282-amino-acid chain: Biotin synthase (282 aa).

Residues 1 to 228 form the Radical SAM core domain; the sequence is MQEIFLCSIS…NARLMAAGGR (228 aa). [4Fe-4S] cluster is bound by residues cysteine 17, cysteine 21, and cysteine 24. Residues cysteine 61, cysteine 96, cysteine 154, and arginine 221 each coordinate [2Fe-2S] cluster.

This sequence belongs to the radical SAM superfamily. Biotin synthase family. In terms of assembly, homodimer. The cofactor is [4Fe-4S] cluster. It depends on [2Fe-2S] cluster as a cofactor.

The catalysed reaction is (4R,5S)-dethiobiotin + (sulfur carrier)-SH + 2 reduced [2Fe-2S]-[ferredoxin] + 2 S-adenosyl-L-methionine = (sulfur carrier)-H + biotin + 2 5'-deoxyadenosine + 2 L-methionine + 2 oxidized [2Fe-2S]-[ferredoxin]. It functions in the pathway cofactor biosynthesis; biotin biosynthesis; biotin from 7,8-diaminononanoate: step 2/2. In terms of biological role, catalyzes the conversion of dethiobiotin (DTB) to biotin by the insertion of a sulfur atom into dethiobiotin via a radical-based mechanism. The polypeptide is Biotin synthase (Helicobacter acinonychis (strain Sheeba)).